Here is a 48-residue protein sequence, read N- to C-terminus: MARYRCCRSPSRSRCRRRRRRCRRRRRRCCRRRRRVCCRRYTVRCRRR.

The protein belongs to the protamine P1 family. As to expression, testis.

Its subcellular location is the nucleus. It localises to the chromosome. Its function is as follows. Protamines substitute for histones in the chromatin of sperm during the haploid phase of spermatogenesis. They compact sperm DNA into a highly condensed, stable and inactive complex. The polypeptide is Sperm protamine P1 (PRM1) (Monophyllus redmani (Greater Antillean long-tongued bat)).